Reading from the N-terminus, the 102-residue chain is Co-chaperonin GroES (102 aa).

The protein belongs to the GroES chaperonin family. As to quaternary structure, heptamer of 7 subunits arranged in a ring. Interacts with the chaperonin GroEL.

The protein resides in the cytoplasm. Its function is as follows. Together with the chaperonin GroEL, plays an essential role in assisting protein folding. The GroEL-GroES system forms a nano-cage that allows encapsulation of the non-native substrate proteins and provides a physical environment optimized to promote and accelerate protein folding. GroES binds to the apical surface of the GroEL ring, thereby capping the opening of the GroEL channel. The polypeptide is Co-chaperonin GroES (Vibrio harveyi (Beneckea harveyi)).